The following is a 257-amino-acid chain: MKLIEKTMSMNQFRTMEEEKQDGGELFHTIEVAKVDRNNVSQPPPAATAALLEVPGDELNLIPPLNFSMVDNGIFRSGFPDSANFSFIKTLGLRSIISLCPEPYPENNMQFLKSNGISLFQFGIEGSKSKCLPGLENEVWLHIWSSKHQKEDFYTNGNSKTSEPFVDILDQKIREALKVLLDEKNHPLLIHCKRGKHRTGCLVGCMRKLQKWCITSILDEYKRFAAAKARVSDQRFLESFDVSGLKHTPMSFSCSNR.

Positions 66-251 constitute a Tyrosine-protein phosphatase domain; sequence NFSMVDNGIF…VSGLKHTPMS (186 aa). 1D-myo-inositol hexakisphosphate-binding residues include isoleucine 168 and lysine 172. The active-site Phosphocysteine intermediate is cysteine 192.

Belongs to the protein-tyrosine phosphatase family. Atypical dual-specificity phosphatase Siw14-like subfamily. In terms of tissue distribution, expressed in roots, leaves, stems, flowers and siliques.

It carries out the reaction 5-diphospho-1D-myo-inositol 1,2,3,4,6-pentakisphosphate + H2O = 1D-myo-inositol hexakisphosphate + phosphate + H(+). The enzyme catalyses 1,5-bis(diphospho)-1D-myo-inositol 2,3,4,6-tetrakisphosphate + H2O = 1-diphospho-1D-myo-inositol 2,3,4,5,6-pentakisphosphate + phosphate + 2 H(+). It catalyses the reaction 3,5-bis(diphospho)-1D-myo-inositol 1,2,4,6-tetrakisphosphate + H2O = 3-diphospho-1D-myo-inositol 1,2,4,5,6-pentakisphosphate + phosphate + 2 H(+). The catalysed reaction is 6-diphospho-1D-myo-inositol pentakisphosphate + H2O = 1D-myo-inositol hexakisphosphate + phosphate + H(+). Cleaves the beta-phosphate at the 5-position of soluble inositol pyrophosphates. Has highest activity on 5-diphosphoinositol 1,2,3,4,6-pentakisphosphate (5-InsP(7)), 1,5-bis-diphosphoinositol 2,3,4,6-tetrakisphosphate (1,5-InsP(8)) and 3,5-InsP(8). Possesses phosphotyrosine phosphatase activity in vitro. Dephosphorylates the phosphoinositides PI(3,5)P2. Hydrolyzes para-nitrophenyl phosphate and O-methylfluorescein phosphate in vitro. The polypeptide is Inositol diphosphatase DSP2 (Arabidopsis thaliana (Mouse-ear cress)).